The primary structure comprises 80 residues: Consomatin Mrc1 (80 aa).

Positions 1 to 22 are cleaved as a signal peptide; that stretch reads MQTAYWVMVMMMVWITAPLSEG. A propeptide spanning residues 23–57 is cleaved from the precursor; that stretch reads GKLNDVIRGLVPDDVTPQLILRSLISRRPSDSVVR. A disulfide bridge links Cys63 with Cys68. Trp65 carries the D-tryptophan modification. Residues Pro69, Pro70, Pro71, and Pro72 each carry the 4-hydroxyproline modification. Residues 74 to 80 constitute a propeptide that is removed on maturation; sequence RRPNGKG.

Belongs to the conotoxin C superfamily. Consomatin family. As to expression, expressed by the venom duct.

The protein localises to the secreted. In terms of biological role, moderately activates human somatostatin receptors (SSTR) with a preferential activation of SSTR1 and SSTR4. In vivo, does not cause behavioral changes in mice within a few minutes of intracranial injection, but causes a progressive loss of movement thereafter. Four to five hours after injection, mice recover, even with the highest dose tested. Shows antinociception and antihyperalgesia activities in two mouse models of acute pain, most probably by acting outside the central nervous system. This Conus mercator (Trader cone) protein is Consomatin Mrc1.